We begin with the raw amino-acid sequence, 237 residues long: Probable glutathione-independent glyoxalase SNO4 (237 aa).

Active-site residues include C138, H139, and E170.

Belongs to the peptidase C56 family. HSP31-like subfamily. In terms of assembly, homodimer.

The protein resides in the cytoplasm. The protein localises to the P-body. The enzyme catalyses methylglyoxal + H2O = (R)-lactate + H(+). Functionally, catalyzes the conversion of methylglyoxal (MG) to D-lactate in a single glutathione (GSH)-independent step. May play a role in detoxifying endogenously produced glyoxals. Involved in protection against reactive oxygen species (ROS). Important for viability in stationary phase. May negatively regulate TORC1 in response to nutrient limitation. The chain is Probable glutathione-independent glyoxalase SNO4 from Saccharomyces cerevisiae (strain ATCC 204508 / S288c) (Baker's yeast).